We begin with the raw amino-acid sequence, 152 residues long: Ferredoxin-thioredoxin reductase catalytic chain, chloroplastic (152 aa).

The N-terminal 38 residues, 1–38, are a transit peptide targeting the chloroplast; the sequence is MTSTVTTTVGCGGLPVRPLSTATRGRPRRCAVRAQAAG. C91 is a [4Fe-4S] cluster binding site. C93 functions as the Nucleophile in the catalytic mechanism. A disulfide bond links C93 and C123. Residues C110, C112, and C121 each coordinate [4Fe-4S] cluster.

Belongs to the ferredoxin thioredoxin reductase beta subunit family. Heterodimer of subunit A (variable subunit) and subunit B (catalytic subunit). Heterodimeric FTR forms a complex with ferredoxin and thioredoxin. The cofactor is [4Fe-4S] cluster.

It localises to the plastid. The protein localises to the chloroplast. The catalysed reaction is [thioredoxin]-disulfide + 2 reduced [2Fe-2S]-[ferredoxin] + 2 H(+) = [thioredoxin]-dithiol + 2 oxidized [2Fe-2S]-[ferredoxin]. In terms of biological role, catalytic subunit of the ferredoxin-thioredoxin reductase (FTR), which catalyzes the two-electron reduction of thioredoxins by the electrons provided by reduced ferredoxin. This Zea mays (Maize) protein is Ferredoxin-thioredoxin reductase catalytic chain, chloroplastic (FTRC).